We begin with the raw amino-acid sequence, 687 residues long: DNA-directed RNA polymerase subunit beta' (687 aa).

Positions 69, 71, 87, and 90 each coordinate Zn(2+). The Mg(2+) site is built by aspartate 495, aspartate 497, and aspartate 499.

This sequence belongs to the RNA polymerase beta' chain family. RpoC1 subfamily. As to quaternary structure, in plastids the minimal PEP RNA polymerase catalytic core is composed of four subunits: alpha, beta, beta', and beta''. When a (nuclear-encoded) sigma factor is associated with the core the holoenzyme is formed, which can initiate transcription. It depends on Mg(2+) as a cofactor. Zn(2+) is required as a cofactor.

The protein resides in the plastid. It is found in the chloroplast. It carries out the reaction RNA(n) + a ribonucleoside 5'-triphosphate = RNA(n+1) + diphosphate. Its function is as follows. DNA-dependent RNA polymerase catalyzes the transcription of DNA into RNA using the four ribonucleoside triphosphates as substrates. This chain is DNA-directed RNA polymerase subunit beta', found in Solanum tuberosum (Potato).